The sequence spans 265 residues: MYTLMKADVLAQLAGLQQEISQLHDNAQQNQSHFVLLERRFSRLQSFNDEPQLQDYRLQLEHDDAVVKQIAQLRQVANAALCDYEKHQVCALCSPSSKTDDYLTSFNQSLQQEIKLAGMQMGEKVLLVGSGALPTTALVLVAKLGATVFCYDHDPAAQQLARQLVQSLGLEKQVQFIDNLKELTDRPVDHIIVASLVADKQALLAQLVPYVTRSSKLVMRYGNGLKSIFNCPYCHEVNCSHWRTASKPVTTGLYDLIILEPNHHA.

The protein belongs to the methyltransferase superfamily. CntL family.

It catalyses the reaction L-histidine + S-adenosyl-L-methionine = (2S)-2-amino-4-{[(1S)-1-carboxy-2-(1H-imidazol-4-yl)ethyl]amino}butanoate + S-methyl-5'-thioadenosine + H(+). Its function is as follows. Catalyzes the nucleophilic attack of one alpha-aminobutanoate moiety from SAM onto L-histidine to produce the intermediate (2S)-2-amino-4-{[(1S)-1-carboxy-2-(1H-imidazol-4-yl)ethyl]amino}butanoate. Functions in the biosynthesis of the metallophore yersinopine, which is involved in metal acquisition and thus enables bacterial growth inside the host, where metal access is limited. Therefore, this enzyme probably contributes to Yersinia virulence. The sequence is that of L-histidine 2-aminobutanoyltransferase from Yersinia pestis.